The chain runs to 178 residues: Large ribosomal subunit protein uL6 (178 aa).

Belongs to the universal ribosomal protein uL6 family. Part of the 50S ribosomal subunit.

Functionally, this protein binds to the 23S rRNA, and is important in its secondary structure. It is located near the subunit interface in the base of the L7/L12 stalk, and near the tRNA binding site of the peptidyltransferase center. This Listeria innocua serovar 6a (strain ATCC BAA-680 / CLIP 11262) protein is Large ribosomal subunit protein uL6.